The sequence spans 86 residues: Probable acyl carrier protein CCNA_01221 (86 aa).

Residues 6–83 (TVTDLSLREI…DLSKLINDLR (78 aa)) enclose the Carrier domain. O-(pantetheine 4'-phosphoryl)serine is present on Ser-43.

This sequence belongs to the acyl carrier protein (ACP) family.

Its pathway is lipid metabolism; sphingolipid metabolism. In terms of biological role, involved in de novo bacterial ceramide synthesis. The sequence is that of Probable acyl carrier protein CCNA_01221 from Caulobacter vibrioides (strain NA1000 / CB15N) (Caulobacter crescentus).